The sequence spans 96 residues: UPF0235 protein PC1_3453 (96 aa).

This sequence belongs to the UPF0235 family.

The protein is UPF0235 protein PC1_3453 of Pectobacterium carotovorum subsp. carotovorum (strain PC1).